Consider the following 27-residue polypeptide: Caerulein precursor fragment R4 (27 aa).

Expressed by the skin glands.

It is found in the secreted. In terms of biological role, antimicrobial peptide. In Xenopus ruwenzoriensis (Uganda clawed frog), this protein is Caerulein precursor fragment R4.